A 246-amino-acid chain; its full sequence is Glucosamine-6-phosphate deaminase (246 aa).

The Proton acceptor; for enolization step role is filled by Asp67. Asn136 acts as the For ring-opening step in catalysis. His138 acts as the Proton acceptor; for ring-opening step in catalysis. The active-site For ring-opening step is the Glu143.

This sequence belongs to the glucosamine/galactosamine-6-phosphate isomerase family. NagB subfamily.

It carries out the reaction alpha-D-glucosamine 6-phosphate + H2O = beta-D-fructose 6-phosphate + NH4(+). It functions in the pathway amino-sugar metabolism; N-acetylneuraminate degradation; D-fructose 6-phosphate from N-acetylneuraminate: step 5/5. Its function is as follows. Catalyzes the reversible isomerization-deamination of glucosamine 6-phosphate (GlcN6P) to form fructose 6-phosphate (Fru6P) and ammonium ion. The protein is Glucosamine-6-phosphate deaminase of Halalkalibacterium halodurans (strain ATCC BAA-125 / DSM 18197 / FERM 7344 / JCM 9153 / C-125) (Bacillus halodurans).